Reading from the N-terminus, the 443-residue chain is Protein AknT (443 aa).

It belongs to the cytochrome P450 family.

In terms of biological role, involved in the biosynthesis of the anthracycline antitumor agent aclacinomycin A. AknT is required for the glycosylation of aklavinone aglycone by AknS to yield aclacinomycin T (rhodosaminyl-aklavinone). This chain is Protein AknT, found in Streptomyces galilaeus.